Reading from the N-terminus, the 180-residue chain is Cancer/testis antigen 1 (180 aa).

Gly residues-rich tracts occupy residues 1–47 and 55–66; these read MQAE…GPRG and GPGGGAPRGPHG. Residues 1–66 form a disordered region; it reads MQAEGRGTGG…GGGAPRGPHG (66 aa).

Belongs to the CTAG/PCC1 family. As to expression, expressed in testis and ovary and in a wide variety of cancers. Detected in uterine myometrium. Expressed from 18 weeks until birth in human fetal testis. In the adult testis, is strongly expressed in spermatogonia and in primary spermatocytes, but not in post-meiotic cells or in testicular somatic cells (at protein level).

It localises to the cytoplasm. In Homo sapiens (Human), this protein is Cancer/testis antigen 1 (CTAG1A).